Reading from the N-terminus, the 113-residue chain is Small ribosomal subunit protein uS14m (113 aa).

The protein belongs to the universal ribosomal protein uS14 family. As to quaternary structure, component of the mitochondrial small ribosomal subunit (mt-SSU). Mature N.crassa 74S mitochondrial ribosomes consist of a small (37S) and a large (54S) subunit. The 37S small subunit contains a 16S ribosomal RNA (16S mt-rRNA) and 32 different proteins. The 54S large subunit contains a 23S rRNA (23S mt-rRNA) and 42 different proteins.

It localises to the mitochondrion. Component of the mitochondrial ribosome (mitoribosome), a dedicated translation machinery responsible for the synthesis of mitochondrial genome-encoded proteins, including at least some of the essential transmembrane subunits of the mitochondrial respiratory chain. The mitoribosomes are attached to the mitochondrial inner membrane and translation products are cotranslationally integrated into the membrane. In Neurospora crassa (strain ATCC 24698 / 74-OR23-1A / CBS 708.71 / DSM 1257 / FGSC 987), this protein is Small ribosomal subunit protein uS14m (mrp2).